The following is a 302-amino-acid chain: uncharacterized protein (302 aa).

Disordered stretches follow at residues 81-100 (ETSD…ERAA), 155-209 (TVTG…PVNP), and 269-302 (LRIE…ALLN). Residues 196 to 209 (PSLPSSLVSSPVNP) show a composition bias toward low complexity.

This is an uncharacterized protein from Ictalurid herpesvirus 1 (strain Auburn) (IcHV-1).